A 192-amino-acid polypeptide reads, in one-letter code: Protein GrpE (192 aa).

Over residues 1–20 (MEERNEQVVEEVKEEVKEAQ) the composition is skewed to basic and acidic residues. Positions 1–34 (MEERNEQVVEEVKEEVKEAQVEEAVTSEDSEETV) are disordered. The span at 25–34 (VTSEDSEETV) shows a compositional bias: acidic residues.

The protein belongs to the GrpE family. Homodimer.

The protein resides in the cytoplasm. Functionally, participates actively in the response to hyperosmotic and heat shock by preventing the aggregation of stress-denatured proteins, in association with DnaK and GrpE. It is the nucleotide exchange factor for DnaK and may function as a thermosensor. Unfolded proteins bind initially to DnaJ; upon interaction with the DnaJ-bound protein, DnaK hydrolyzes its bound ATP, resulting in the formation of a stable complex. GrpE releases ADP from DnaK; ATP binding to DnaK triggers the release of the substrate protein, thus completing the reaction cycle. Several rounds of ATP-dependent interactions between DnaJ, DnaK and GrpE are required for fully efficient folding. This Bacillus cereus (strain AH187) protein is Protein GrpE.